We begin with the raw amino-acid sequence, 103 residues long: Cell division protein FtsB (103 aa).

The Cytoplasmic portion of the chain corresponds to methionine 1 to lysine 3. Residues leucine 4–phenylalanine 21 traverse the membrane as a helical segment. At glycine 22–arginine 103 the chain is on the periplasmic side. Residues arginine 31–alanine 71 adopt a coiled-coil conformation.

The protein belongs to the FtsB family. In terms of assembly, part of a complex composed of FtsB, FtsL and FtsQ.

Its subcellular location is the cell inner membrane. Essential cell division protein. May link together the upstream cell division proteins, which are predominantly cytoplasmic, with the downstream cell division proteins, which are predominantly periplasmic. In Escherichia fergusonii (strain ATCC 35469 / DSM 13698 / CCUG 18766 / IAM 14443 / JCM 21226 / LMG 7866 / NBRC 102419 / NCTC 12128 / CDC 0568-73), this protein is Cell division protein FtsB.